The primary structure comprises 226 residues: Leucyl/phenylalanyl-tRNA--protein transferase (226 aa).

Belongs to the L/F-transferase family.

It is found in the cytoplasm. The enzyme catalyses N-terminal L-lysyl-[protein] + L-leucyl-tRNA(Leu) = N-terminal L-leucyl-L-lysyl-[protein] + tRNA(Leu) + H(+). It carries out the reaction N-terminal L-arginyl-[protein] + L-leucyl-tRNA(Leu) = N-terminal L-leucyl-L-arginyl-[protein] + tRNA(Leu) + H(+). It catalyses the reaction L-phenylalanyl-tRNA(Phe) + an N-terminal L-alpha-aminoacyl-[protein] = an N-terminal L-phenylalanyl-L-alpha-aminoacyl-[protein] + tRNA(Phe). Its function is as follows. Functions in the N-end rule pathway of protein degradation where it conjugates Leu, Phe and, less efficiently, Met from aminoacyl-tRNAs to the N-termini of proteins containing an N-terminal arginine or lysine. The protein is Leucyl/phenylalanyl-tRNA--protein transferase of Azotobacter vinelandii (strain DJ / ATCC BAA-1303).